The sequence spans 119 residues: Large ribosomal subunit protein bL20 (119 aa).

It belongs to the bacterial ribosomal protein bL20 family.

In terms of biological role, binds directly to 23S ribosomal RNA and is necessary for the in vitro assembly process of the 50S ribosomal subunit. It is not involved in the protein synthesizing functions of that subunit. This chain is Large ribosomal subunit protein bL20, found in Rhodopseudomonas palustris (strain ATCC BAA-98 / CGA009).